Reading from the N-terminus, the 2266-residue chain is RNA1 polyprotein (2266 aa).

The Cytoplasmic segment spans residues 566–1158 (LCTALAAGIF…AGRDYLVQNG (593 aa)). The 167-residue stretch at 751–917 (MKDLVELHKR…PGVIYDPENP (167 aa)) folds into the SF3 helicase domain. 781-788 (GQRHCGKS) is a binding site for ATP. A helical membrane pass occupies residues 1159–1179 (CGILMIAAALILILVSGWGFW). Residues 1180–1205 (KLFVGLFSGTMSLGAAITGMSAVDIK) lie on the Lumenal side of the membrane. A Peptidase C3 domain is found at 1229–1438 (AYARSQAGDG…WADIMPPNSL (210 aa)). Catalysis depends on for picornain 3C-like protease activity residues His-1272, Glu-1310, and Cys-1402. Positions 1715–1843 (NEAINCDYSG…SVSPSIASWF (129 aa)) constitute a RdRp catalytic domain.

The protein belongs to the nepoviruses RNA1 polyprotein family. Post-translationally, specific enzymatic cleavages by picornain 3C-like protease in vivo yield mature proteins. Picornain 3C-like protease is autocatalytically processed. VPg is uridylylated by the polymerase and is covalently linked to the 5'-end of genomic RNA. This uridylylated form acts as a nucleotide-peptide primer for the polymerase.

Its subcellular location is the host endoplasmic reticulum lumen. It is found in the host endoplasmic reticulum membrane. It catalyses the reaction RNA(n) + a ribonucleoside 5'-triphosphate = RNA(n+1) + diphosphate. In terms of biological role, picornain 3C-like protease is a thiol protease that cleaves the P1 and P2 polyproteins. The polypeptide is RNA1 polyprotein (Tomato black ring virus (strain MJ) (TBRV)).